The primary structure comprises 201 residues: MKIINSDLEKIAFLIEQYPDESLPEIAFCGRSNVGKSSFINSILDRKNLARTSSKPGKTRTVNFYNANNEFRLVDLPGYGYAQTSKSEKKKWAQVIETYLNNRRNLYEVFLIVDIRHKPTVQDKEMYNWIIQSGFCGFVIATKLDKIGKTMIKKNLNIIKKELNIDDDNLIYEYSSTSKTNKKAVMEQLEMILKYGSGIEE.

Residues 22–195 (SLPEIAFCGR…MEQLEMILKY (174 aa)) enclose the EngB-type G domain. GTP contacts are provided by residues 30–37 (GRSNVGKS), 57–61 (GKTRT), 75–78 (DLPG), 142–145 (TKLD), and 174–176 (YSS). 2 residues coordinate Mg(2+): serine 37 and threonine 59.

Belongs to the TRAFAC class TrmE-Era-EngA-EngB-Septin-like GTPase superfamily. EngB GTPase family. Requires Mg(2+) as cofactor.

In terms of biological role, necessary for normal cell division and for the maintenance of normal septation. In Finegoldia magna (strain ATCC 29328 / DSM 20472 / WAL 2508) (Peptostreptococcus magnus), this protein is Probable GTP-binding protein EngB.